Reading from the N-terminus, the 196-residue chain is DNA polymerase epsilon subunit D (196 aa).

The disordered stretch occupies residues 125–196 (RKKEKLDSGE…ETRVQNLEQT (72 aa)). Residues 133 to 143 (GEVDADGDIDM) are compositionally biased toward acidic residues. Positions 144-159 (GEDKENVPVEKVKEHD) are enriched in basic and acidic residues. Acidic residues predominate over residues 160–173 (EIEEQGDALQDVEE). The segment covering 174-188 (SSEKKQKTESQDVET) has biased composition (basic and acidic residues). At serine 183 the chain carries Phosphoserine; by ATM or ATR.

In terms of assembly, DNA polymerase epsilon is a heterotetramer consisting of POL2, DPB2, DPB3 and DPB4. Component of the ISW2 complex, which at least consists of ISW2, ITC1, DLS1 and DPB4.

The protein resides in the nucleus. In terms of biological role, as accessory component of the DNA polymerase epsilon (DNA polymerase II) participates in chromosomal DNA replication. It is required during synthesis of the leading and lagging DNA strands at the replication fork and binds at/or near replication origins and moves along DNA with the replication fork. It has 3'-5' proofreading exonuclease activity that correct errors arising during DNA replication. It is also involved in DNA synthesis during DNA repair. Also functions as a component of the ISW2 complex, which acts in remodeling the chromatin by catalyzing an ATP-dependent alteration in the structure of nucleosomal DNA. The ISW2 complex is involved in coordinating transcriptional repression and in inheritance of telomeric silencing. It is involved in repression of MAT a-specific genes, INO1, and early meiotic genes during mitotic growth dependent upon transcription factor UME6 and in a parallel pathway to the RPD3-SIN3 histone deacetylase complex. This Saccharomyces cerevisiae (strain ATCC 204508 / S288c) (Baker's yeast) protein is DNA polymerase epsilon subunit D (DPB4).